A 440-amino-acid chain; its full sequence is Tryptophan synthase beta chain (440 aa).

Residue Lys-110 is modified to N6-(pyridoxal phosphate)lysine.

Belongs to the TrpB family. Tetramer of two alpha and two beta chains. Pyridoxal 5'-phosphate serves as cofactor.

It catalyses the reaction (1S,2R)-1-C-(indol-3-yl)glycerol 3-phosphate + L-serine = D-glyceraldehyde 3-phosphate + L-tryptophan + H2O. Its pathway is amino-acid biosynthesis; L-tryptophan biosynthesis; L-tryptophan from chorismate: step 5/5. Functionally, the beta subunit is responsible for the synthesis of L-tryptophan from indole and L-serine. The polypeptide is Tryptophan synthase beta chain (Thermococcus gammatolerans (strain DSM 15229 / JCM 11827 / EJ3)).